A 375-amino-acid polypeptide reads, in one-letter code: Probable UDP-N-acetylglucosamine 2-epimerase (375 aa).

The protein belongs to the UDP-N-acetylglucosamine 2-epimerase family.

Its subcellular location is the cytoplasm. It carries out the reaction UDP-N-acetyl-alpha-D-glucosamine = UDP-N-acetyl-alpha-D-mannosamine. Its pathway is glycan metabolism; exopolysaccharide EPS I biosynthesis. May be involved in synthesis of N-acetyltrideoxygalactose, a component of exopolysaccharide EPS I which functions as a virulence factor. The sequence is that of Probable UDP-N-acetylglucosamine 2-epimerase (epsC) from Ralstonia nicotianae (strain ATCC BAA-1114 / GMI1000) (Ralstonia solanacearum).